Reading from the N-terminus, the 106-residue chain is ATP-dependent Clp protease adapter protein ClpS (106 aa).

It belongs to the ClpS family. In terms of assembly, binds to the N-terminal domain of the chaperone ClpA.

Functionally, involved in the modulation of the specificity of the ClpAP-mediated ATP-dependent protein degradation. This chain is ATP-dependent Clp protease adapter protein ClpS, found in Vibrio atlanticus (strain LGP32) (Vibrio splendidus (strain Mel32)).